Here is a 203-residue protein sequence, read N- to C-terminus: MAEGDNRSSNLLAAETASLEEQLQGWGEVMLMADKVLRWERAWFPPAIMGVVSLVFLIIYYLDPSVLSGVSCFVMFLCLADYLVPILAPRIFGSNKWTTEQQQRFHEICSNLVKTRRRAVGWWKRLFTLKEEKPKMYFMTMIVSLAAVAWVGQQVHNLLLTYLIVTSLLLLPGLNQHGIISKYIGMAKREINKLLKQKEKKNE.

Residues 1–41 (MAEGDNRSSNLLAAETASLEEQLQGWGEVMLMADKVLRWER) lie on the Cytoplasmic side of the membrane. A helical membrane pass occupies residues 42–62 (AWFPPAIMGVVSLVFLIIYYL). Topologically, residues 63-65 (DPS) are lumenal. Residues 66–86 (VLSGVSCFVMFLCLADYLVPI) form a helical membrane-spanning segment. Residues 87–133 (LAPRIFGSNKWTTEQQQRFHEICSNLVKTRRRAVGWWKRLFTLKEEK) lie on the Cytoplasmic side of the membrane. A helical membrane pass occupies residues 134–175 (PKMYFMTMIVSLAAVAWVGQQVHNLLLTYLIVTSLLLLPGLN). Residues 176 to 203 (QHGIISKYIGMAKREINKLLKQKEKKNE) lie on the Lumenal side of the membrane.

The protein belongs to the ARL6ip family. Homooligomer. Heterodimer with ARL6IP5. Interacts with ATL1, TMEM33 and ARL6.

The protein localises to the endomembrane system. It localises to the endoplasmic reticulum membrane. It is found in the endoplasmic reticulum. Positively regulates SLC1A1/EAAC1-mediated glutamate transport by increasing its affinity for glutamate in a PKC activity-dependent manner. Promotes the catalytic efficiency of SLC1A1/EAAC1 probably by reducing its interaction with ARL6IP5, a negative regulator of SLC1A1/EAAC1-mediated glutamate transport. Plays a role in the formation and stabilization of endoplasmic reticulum tubules. Negatively regulates apoptosis, possibly by modulating the activity of caspase-9 (CASP9). Inhibits cleavage of CASP9-dependent substrates and downstream markers of apoptosis but not CASP9 itself. May be involved in protein transport, membrane trafficking, or cell signaling during hematopoietic maturation. The sequence is that of ADP-ribosylation factor-like protein 6-interacting protein 1 (ARL6IP1) from Pongo abelii (Sumatran orangutan).